Here is a 575-residue protein sequence, read N- to C-terminus: Reverse gyrse subunit B (575 aa).

An RG N-terminal-type; degenerate zinc finger spans residues 1–39 (MKIYYNNVCPNCSGRISNERLIKGLPCENDYPYEEGTIE). Residues Gln-83 and 100–107 (APTGMGKT) contribute to the ATP site. One can recognise a Helicase ATP-binding domain in the interval 87–247 (FIRAYKGYSF…KLKISGKDLE (161 aa)). Positions 204–207 (DDVD) match the DEAD box motif. The region spanning 316 to 465 (QTLELIKKLG…ALKMVEEAIE (150 aa)) is the Helicase C-terminal domain.

This sequence belongs to the DEAD box helicase family. DDVD subfamily. As to quaternary structure, heterodimer of an RgyA and RgyB subunit.

It is found in the cytoplasm. It carries out the reaction ATP + H2O = ADP + phosphate + H(+). Modifies the topological state of DNA by introducing positive supercoils in an ATP-dependent process. Binds to single-stranded DNA, transiently cleaves and then rejoins the end, introducing a positive supercoil in the process. The scissile phosphodiester is attacked by the catalytic tyrosine of the enzyme, resulting in the formation of a DNA-(5'-phosphotyrosyl)-enzyme intermediate. Probably involved in rewinding DNA strands in regions of the chromosome that have opened up to allow replication, transcription, DNA repair or for DNA protection. Reconstituted holoenzyme binds dsDNA a bit better than ssDNA, this subunit preferentially binds dsDNA. In isolation this subunit has DNA-stimulated ATPase activity that is stimulated by topoisomerase-domain containing RgyA. This subunit inhibits the relaxation activity of the topoisomerase subunit while promoting positive supercoiling. The polypeptide is Reverse gyrse subunit B (Nanoarchaeum equitans (strain Kin4-M)).